A 554-amino-acid polypeptide reads, in one-letter code: Glutamine--tRNA ligase (554 aa).

The 'HIGH' region motif lies at 34–44 (PEPNGYLHIGH). ATP-binding positions include 35 to 37 (EPN) and 41 to 47 (HIGHAKS). The L-glutamine site is built by Asp-67 and Tyr-212. ATP-binding positions include Thr-231, 261–262 (RL), and 269–271 (MSK). The 'KMSKS' region motif lies at 268-272 (VMSKR). The interval 317 to 324 (TKQDNTIE) is interaction with tRNA.

Belongs to the class-I aminoacyl-tRNA synthetase family. In terms of assembly, monomer.

It is found in the cytoplasm. The catalysed reaction is tRNA(Gln) + L-glutamine + ATP = L-glutaminyl-tRNA(Gln) + AMP + diphosphate. This is Glutamine--tRNA ligase from Shigella boydii serotype 18 (strain CDC 3083-94 / BS512).